The chain runs to 506 residues: Cobyric acid synthase (506 aa).

The GATase cobBQ-type domain maps to 251-448 (DITIAIVQLP…LHGLFDSDAF (198 aa)). C332 serves as the catalytic Nucleophile. The active site involves H440.

The protein belongs to the CobB/CobQ family. CobQ subfamily.

It functions in the pathway cofactor biosynthesis; adenosylcobalamin biosynthesis. Catalyzes amidations at positions B, D, E, and G on adenosylcobyrinic A,C-diamide. NH(2) groups are provided by glutamine, and one molecule of ATP is hydrogenolyzed for each amidation. The sequence is that of Cobyric acid synthase from Salmonella heidelberg (strain SL476).